The primary structure comprises 288 residues: Homeobox protein Hox-B4a (288 aa).

The interval 10-136 (SNYVDPKFPP…ASSPASTRKD (127 aa)) is disordered. Positions 118-132 (CGQTPHSQGASSPAS) are enriched in polar residues. The Antp-type hexapeptide signature appears at 139 to 144 (VYPWMK). The segment at residues 160-219 (PKRSRTAYTRQQVLELEKEFHYNRYLTRRRRVEIAHTLCLSERQIKIWFQNRRMKWKKDH) is a DNA-binding region (homeobox).

This sequence belongs to the Antp homeobox family. Deformed subfamily.

The protein localises to the nucleus. Sequence-specific transcription factor which is part of a developmental regulatory system that provides cells with specific positional identities on the anterior-posterior axis. This Takifugu rubripes (Japanese pufferfish) protein is Homeobox protein Hox-B4a (hoxb4a).